Here is a 705-residue protein sequence, read N- to C-terminus: Translation initiation factor IF-2 (705 aa).

Residues 40–124 (DDQIKALDKK…QPAAPKEIPS (85 aa)) form a disordered region. Residues 41-58 (DQIKALDKKFKKEQKNDN) show a composition bias toward basic and acidic residues. Residues 59–77 (KQSTQNNHQKSNNQNQNKG) show a composition bias toward low complexity. Residues 94-108 (KGNKKNNRNNKKNNK) are compositionally biased toward basic residues. The tr-type G domain occupies 207 to 376 (ERPAVVTIMG…GLVAEVQELK (170 aa)). Residues 216–223 (GHVDHGKT) form a G1 region. 216–223 (GHVDHGKT) contacts GTP. A G2 region spans residues 241-245 (GITQH). A G3 region spans residues 262-265 (DTPG). GTP is bound by residues 262 to 266 (DTPGH) and 316 to 319 (NKID). The tract at residues 316–319 (NKID) is G4. The segment at 352-354 (SAL) is G5.

Belongs to the TRAFAC class translation factor GTPase superfamily. Classic translation factor GTPase family. IF-2 subfamily.

The protein localises to the cytoplasm. Functionally, one of the essential components for the initiation of protein synthesis. Protects formylmethionyl-tRNA from spontaneous hydrolysis and promotes its binding to the 30S ribosomal subunits. Also involved in the hydrolysis of GTP during the formation of the 70S ribosomal complex. The sequence is that of Translation initiation factor IF-2 from Staphylococcus aureus (strain USA300).